The primary structure comprises 478 residues: Protein nucleotidyltransferase YdiU (478 aa).

Positions 84, 86, 87, 107, 119, 120, 170, and 177 each coordinate ATP. The active-site Proton acceptor is D246. The Mg(2+) site is built by N247 and D256. D256 lines the ATP pocket.

Belongs to the SELO family. It depends on Mg(2+) as a cofactor. Requires Mn(2+) as cofactor.

It carries out the reaction L-seryl-[protein] + ATP = 3-O-(5'-adenylyl)-L-seryl-[protein] + diphosphate. The catalysed reaction is L-threonyl-[protein] + ATP = 3-O-(5'-adenylyl)-L-threonyl-[protein] + diphosphate. It catalyses the reaction L-tyrosyl-[protein] + ATP = O-(5'-adenylyl)-L-tyrosyl-[protein] + diphosphate. The enzyme catalyses L-histidyl-[protein] + UTP = N(tele)-(5'-uridylyl)-L-histidyl-[protein] + diphosphate. It carries out the reaction L-seryl-[protein] + UTP = O-(5'-uridylyl)-L-seryl-[protein] + diphosphate. The catalysed reaction is L-tyrosyl-[protein] + UTP = O-(5'-uridylyl)-L-tyrosyl-[protein] + diphosphate. In terms of biological role, nucleotidyltransferase involved in the post-translational modification of proteins. It can catalyze the addition of adenosine monophosphate (AMP) or uridine monophosphate (UMP) to a protein, resulting in modifications known as AMPylation and UMPylation. In Escherichia coli O17:K52:H18 (strain UMN026 / ExPEC), this protein is Protein nucleotidyltransferase YdiU.